We begin with the raw amino-acid sequence, 98 residues long: Integration host factor subunit alpha (98 aa).

The protein belongs to the bacterial histone-like protein family. In terms of assembly, heterodimer of an alpha and a beta chain.

This protein is one of the two subunits of integration host factor, a specific DNA-binding protein that functions in genetic recombination as well as in transcriptional and translational control. The protein is Integration host factor subunit alpha of Actinobacillus pleuropneumoniae serotype 5b (strain L20).